Consider the following 264-residue polypeptide: Thymidylate synthase (264 aa).

Arginine 21 contributes to the dUMP binding site. A (6R)-5,10-methylene-5,6,7,8-tetrahydrofolate-binding site is contributed by histidine 51. 126-127 serves as a coordination point for dUMP; it reads RR. Cysteine 146 serves as the catalytic Nucleophile. Residues 166–169, asparagine 177, and 207–209 contribute to the dUMP site; these read RSAD and HLY. (6R)-5,10-methylene-5,6,7,8-tetrahydrofolate is bound at residue aspartate 169. (6R)-5,10-methylene-5,6,7,8-tetrahydrofolate is bound at residue alanine 263.

It belongs to the thymidylate synthase family. Bacterial-type ThyA subfamily. As to quaternary structure, homodimer.

Its subcellular location is the cytoplasm. The enzyme catalyses dUMP + (6R)-5,10-methylene-5,6,7,8-tetrahydrofolate = 7,8-dihydrofolate + dTMP. It participates in pyrimidine metabolism; dTTP biosynthesis. Functionally, catalyzes the reductive methylation of 2'-deoxyuridine-5'-monophosphate (dUMP) to 2'-deoxythymidine-5'-monophosphate (dTMP) while utilizing 5,10-methylenetetrahydrofolate (mTHF) as the methyl donor and reductant in the reaction, yielding dihydrofolate (DHF) as a by-product. This enzymatic reaction provides an intracellular de novo source of dTMP, an essential precursor for DNA biosynthesis. The sequence is that of Thymidylate synthase from Ralstonia nicotianae (strain ATCC BAA-1114 / GMI1000) (Ralstonia solanacearum).